A 543-amino-acid chain; its full sequence is Cytochrome P450 1B1 (543 aa).

Residue C470 participates in heme binding.

This sequence belongs to the cytochrome P450 family. Heme serves as cofactor.

The protein resides in the endoplasmic reticulum membrane. It is found in the microsome membrane. It localises to the mitochondrion. The catalysed reaction is an organic molecule + reduced [NADPH--hemoprotein reductase] + O2 = an alcohol + oxidized [NADPH--hemoprotein reductase] + H2O + H(+). It catalyses the reaction 17beta-estradiol + reduced [NADPH--hemoprotein reductase] + O2 = 2-hydroxy-17beta-estradiol + oxidized [NADPH--hemoprotein reductase] + H2O + H(+). The enzyme catalyses 17beta-estradiol + reduced [NADPH--hemoprotein reductase] + O2 = 4-hydroxy-17beta-estradiol + oxidized [NADPH--hemoprotein reductase] + H2O + H(+). It carries out the reaction estrone + reduced [NADPH--hemoprotein reductase] + O2 = 2-hydroxyestrone + oxidized [NADPH--hemoprotein reductase] + H2O + H(+). The catalysed reaction is estrone + reduced [NADPH--hemoprotein reductase] + O2 = 4-hydroxyestrone + oxidized [NADPH--hemoprotein reductase] + H2O + H(+). It catalyses the reaction testosterone + reduced [NADPH--hemoprotein reductase] + O2 = 6beta,17beta-dihydroxyandrost-4-en-3-one + oxidized [NADPH--hemoprotein reductase] + H2O + H(+). The enzyme catalyses progesterone + reduced [NADPH--hemoprotein reductase] + O2 = 6beta-hydroxyprogesterone + oxidized [NADPH--hemoprotein reductase] + H2O + H(+). It carries out the reaction progesterone + reduced [NADPH--hemoprotein reductase] + O2 = 16alpha-hydroxyprogesterone + oxidized [NADPH--hemoprotein reductase] + H2O + H(+). The catalysed reaction is all-trans-retinol + reduced [NADPH--hemoprotein reductase] + O2 = all-trans-retinal + oxidized [NADPH--hemoprotein reductase] + 2 H2O + H(+). It catalyses the reaction all-trans-retinal + reduced [NADPH--hemoprotein reductase] + O2 = all-trans-retinoate + oxidized [NADPH--hemoprotein reductase] + H2O + 2 H(+). The enzyme catalyses (5Z,8Z,11Z,14Z)-eicosatetraenoate + reduced [NADPH--hemoprotein reductase] + O2 = (8R,9S)-epoxy-(5Z,11Z,14Z)-eicosatrienoate + oxidized [NADPH--hemoprotein reductase] + H2O + H(+). It carries out the reaction (5Z,8Z,11Z,14Z)-eicosatetraenoate + reduced [NADPH--hemoprotein reductase] + O2 = (11R,12S)-epoxy-(5Z,8Z,14Z)-eicosatrienoate + oxidized [NADPH--hemoprotein reductase] + H2O + H(+). The catalysed reaction is (5Z,8Z,11Z,14Z)-eicosatetraenoate + reduced [NADPH--hemoprotein reductase] + O2 = (11S,12R)-epoxy-(5Z,8Z,14Z)-eicosatrienoate + oxidized [NADPH--hemoprotein reductase] + H2O + H(+). It catalyses the reaction (5Z,8Z,11Z,14Z)-eicosatetraenoate + reduced [NADPH--hemoprotein reductase] + O2 = (14S,15R)-epoxy-(5Z,8Z,11Z)-eicosatrienoate + oxidized [NADPH--hemoprotein reductase] + H2O + H(+). The enzyme catalyses (5Z,8Z,11Z,14Z)-eicosatetraenoate + reduced [NADPH--hemoprotein reductase] + O2 = (14R,15S)-epoxy-(5Z,8Z,11Z)-eicosatrienoate + oxidized [NADPH--hemoprotein reductase] + H2O + H(+). It carries out the reaction (5S)-hydroperoxy-(6E,8Z,11Z,14Z)-eicosatetraenoate = 5-oxo-(6E,8Z,11Z,14Z)-eicosatetraenoate + H2O. The catalysed reaction is (12S)-hydroperoxy-(5Z,8Z,10E,14Z)-eicosatetraenoate = 12-oxo-(5Z,8Z,10E,14Z)-eicosatetraenoate + H2O. It catalyses the reaction (15S)-hydroperoxy-(5Z,8Z,11Z,13E)-eicosatetraenoate = 15-oxo-(5Z,8Z,11Z,13E)-eicosatetraenoate + H2O. The enzyme catalyses (13S)-hydroperoxy-(9Z,11E)-octadecadienoate = 13-oxo-(9Z,11E)-octadecadienoate + H2O. It participates in steroid hormone biosynthesis. It functions in the pathway cofactor metabolism; retinol metabolism. Its pathway is lipid metabolism; arachidonate metabolism. Enzyme activity is increased by cytochrome b5. Enzyme activity is increased by liposomes containing anionic phospholipids, phosphatidic acid and cardiolipin. Inhibited by naringenin with an IC(50) of 5 uM. Functionally, a cytochrome P450 monooxygenase involved in the metabolism of various endogenous substrates, including fatty acids, steroid hormones and vitamins. Mechanistically, uses molecular oxygen inserting one oxygen atom into a substrate, and reducing the second into a water molecule, with two electrons provided by NADPH via cytochrome P450 reductase (NADPH--hemoprotein reductase). Exhibits catalytic activity for the formation of hydroxyestrogens from 17beta-estradiol (E2), namely 2- and 4-hydroxy E2. Metabolizes testosterone and progesterone to B or D ring hydroxylated metabolites. May act as a major enzyme for all-trans retinoic acid biosynthesis in extrahepatic tissues. Catalyzes two successive oxidative transformation of all-trans retinol to all-trans retinal and then to the active form all-trans retinoic acid. Catalyzes the epoxidation of double bonds of certain PUFA. Converts arachidonic acid toward epoxyeicosatrienoic acid (EpETrE) regioisomers, 8,9-, 11,12-, and 14,15- EpETrE, that function as lipid mediators in the vascular system. Additionally, displays dehydratase activity toward oxygenated eicosanoids including hydroperoxyeicosatetraenoates (HpETEs). This activity is independent of cytochrome P450 reductase, NADPH, and O2. Also involved in the oxidative metabolism of xenobiotics, particularly converting polycyclic aromatic hydrocarbons and heterocyclic aryl amines procarcinogens to DNA-damaging products. Plays an important role in retinal vascular development. Under ambient/hyperoxic O2 conditions, promotes angiogenesis and capillary morphogenesis of retinal endothelial cells and pericytes, likely by metabolizing the oxygenated products symptomatic of oxidative stress. Also, contributes to oxidative homeostasis and ultrastructural organization and function of trabecular meshwork tissue through modulation of POSTN expression. This chain is Cytochrome P450 1B1, found in Rattus norvegicus (Rat).